Consider the following 173-residue polypeptide: 3-hydroxydecanoyl-[acyl-carrier-protein] dehydratase (173 aa).

The active site involves His71.

It belongs to the thioester dehydratase family. FabA subfamily. In terms of assembly, homodimer.

The protein localises to the cytoplasm. It carries out the reaction a (3R)-hydroxyacyl-[ACP] = a (2E)-enoyl-[ACP] + H2O. The catalysed reaction is (3R)-hydroxydecanoyl-[ACP] = (2E)-decenoyl-[ACP] + H2O. It catalyses the reaction (2E)-decenoyl-[ACP] = (3Z)-decenoyl-[ACP]. It participates in lipid metabolism; fatty acid biosynthesis. Its function is as follows. Necessary for the introduction of cis unsaturation into fatty acids. Catalyzes the dehydration of (3R)-3-hydroxydecanoyl-ACP to E-(2)-decenoyl-ACP and then its isomerization to Z-(3)-decenoyl-ACP. Can catalyze the dehydratase reaction for beta-hydroxyacyl-ACPs with saturated chain lengths up to 16:0, being most active on intermediate chain length. This chain is 3-hydroxydecanoyl-[acyl-carrier-protein] dehydratase, found in Baumannia cicadellinicola subsp. Homalodisca coagulata.